A 228-amino-acid chain; its full sequence is Protein LIAT1 (228 aa).

The interval 1–108 is disordered; sequence MAGRGGTGAA…RAEPRDKEEN (108 aa). Residues 12-24 are compositionally biased toward acidic residues; the sequence is YGEEGEEEEEEEA. The lysine-rich domain stretch occupies residues 49 to 71; it reads KRKVKKKKKKKKTKGSGKGDADK. A compositionally biased stretch (basic residues) spans 50 to 63; that stretch reads RKVKKKKKKKKTKG. A compositionally biased stretch (basic and acidic residues) spans 90–108; sequence LNPHKDHGLRAEPRDKEEN. The interaction with ATE1 stretch occupies residues 113–165; it reads PYSYSINHPCFAEIEDTLSSQINESLRWDGILTDPEAEKERIRIYKLNRRKRY. Copy 1 of the repeat occupies 169–178; the sequence is ALKCFHSDPC.

As to quaternary structure, self-associates (via Lys-rich domain); targets LIAT1 to the nucleolus. Interacts with ATE1; it is not a substrate of ATE1, the interaction takes place in the cytoplasm and seems to increase ATE1 arginyltransferase activity. Interacts with JMJD6 and MRPS14. Post-translationally, post-translationally modified by JMJD6 lysyl-hydroxylase activity at its Lys-rich domain, which inhibits its self-association and nucleolar localization. In terms of tissue distribution, highly expressed in spleen, thymus, liver and brown adipose tissue. Moderately expressed in liver, testis and lung.

The protein resides in the nucleus. The protein localises to the nucleolus. Its subcellular location is the cytoplasm. In terms of biological role, participates in nucleolar liquid-liquid phase separation (LLPS) through its N-terminal intrinsically disordered region (IDR). May be involved in ATE1-mediated N-terminal arginylation. The chain is Protein LIAT1 from Mus musculus (Mouse).